The sequence spans 789 residues: MSKLDMDTPEFSANEQELIDKEFTRLERNQSTYLDHAGTTLYAESQVAHAAVQLHHDVISNPHTSRSTGDYVDQVRFKILEFFHTQAEDYQVIFTANASAALRLVAEHFDFGDKGNFHYCQENHTSVLGMRQMIQANGTYMLRREELSELREGHRVRRVMANGSSSTGNSLVVFSAQCNFSGYKMPLETIQLIQDDGLPHFGKLIAGQEDKETNGTAYNYYVCLDAASYAATNPLDLQKYKPDFVCLSFYKIFGYPTGVGALLVSRRGAELLSRPRQFYGGGTINYAYAHAMDYKLRNTSLHERFEDGTLPFLSIVELLEGFRSLERLIPTNSNTGISTMDRVSRHVFTLARYLENQLKQLKYANGQPLIQFYNHQGYEQRSRQGGIVAFNVRTESGGYVGFAEIACVASLHGILLRTGCFCNVGACQRYLQLDDQMMDVIYKRSGRICGDYNDLIDGQPTGAVRVSFGYMTRTSDVRKLVEMLEKSYLSSRSPERWRFIEKQASQLPKALQQRAQSLRPRLLELAIFPVKSCAALKAKKWPLTAQGLKYDREWMIVDRNGLALTQKRCTDLCLIQPSIDKDNLILMFNGDTNSSISLPLFLSDDDLQAAARCRSKICRQPIEGSDCGDQVAQWLDQNLGLDGLRLLRQSTQRSSSSHQLSLVNQAQFLLVNRSSVRSLQFEEPLDETVDRFRANLIIDTGAPFDELDYTSLSIGRIHFKVEGPCQRCDMICINQRTGERSPETLTTISRLQKGKMRFGIYITRLTDKEDNAELNEEYHLICGETLEVD.

An N6-(pyridoxal phosphate)lysine modification is found at Lys-251. Cys-422 is a catalytic residue. The 162-residue stretch at 628–789 (GDQVAQWLDQ…LICGETLEVD (162 aa)) folds into the MOSC domain. Ser-741 is subject to Phosphoserine.

It belongs to the class-V pyridoxal-phosphate-dependent aminotransferase family. MOCOS subfamily. Pyridoxal 5'-phosphate is required as a cofactor.

The enzyme catalyses Mo-molybdopterin + L-cysteine + AH2 = thio-Mo-molybdopterin + L-alanine + A + H2O. The protein operates within cofactor biosynthesis; molybdopterin biosynthesis. In terms of biological role, sulfurates the molybdenum cofactor. Sulfation of molybdenum is essential for xanthine dehydrogenase (XDH) and aldehyde oxidase (ADO) enzymes in which molybdenum cofactor is liganded by 1 oxygen and 1 sulfur atom in active form. The protein is Molybdenum cofactor sulfurase of Drosophila willistoni (Fruit fly).